The primary structure comprises 167 residues: Photosystem I assembly protein Ycf3 (167 aa).

TPR repeat units follow at residues 35–68, 72–105, and 120–153; these read AFTY…EIDP, SYIL…NPSL, and GEQA…APSN.

This sequence belongs to the Ycf3 family.

Its subcellular location is the plastid. It localises to the chloroplast thylakoid membrane. In terms of biological role, essential for the assembly of the photosystem I (PSI) complex. May act as a chaperone-like factor to guide the assembly of the PSI subunits. This is Photosystem I assembly protein Ycf3 from Marchantia polymorpha (Common liverwort).